A 159-amino-acid chain; its full sequence is Protein-export protein SecB (159 aa).

The protein belongs to the SecB family. As to quaternary structure, homotetramer, a dimer of dimers. One homotetramer interacts with 1 SecA dimer.

The protein localises to the cytoplasm. In terms of biological role, one of the proteins required for the normal export of preproteins out of the cell cytoplasm. It is a molecular chaperone that binds to a subset of precursor proteins, maintaining them in a translocation-competent state. It also specifically binds to its receptor SecA. In Pseudomonas fluorescens (strain ATCC BAA-477 / NRRL B-23932 / Pf-5), this protein is Protein-export protein SecB.